A 147-amino-acid polypeptide reads, in one-letter code: Lipoprotein signal peptidase (147 aa).

4 helical membrane passes run isoleucine 10–leucine 30, glycine 34–phenylalanine 54, phenylalanine 59–methionine 79, and tryptophan 87–tyrosine 107. Residues aspartate 112 and aspartate 130 contribute to the active site. A helical transmembrane segment spans residues leucine 121 to valine 141.

Belongs to the peptidase A8 family.

Its subcellular location is the cell inner membrane. The catalysed reaction is Release of signal peptides from bacterial membrane prolipoproteins. Hydrolyzes -Xaa-Yaa-Zaa-|-(S,diacylglyceryl)Cys-, in which Xaa is hydrophobic (preferably Leu), and Yaa (Ala or Ser) and Zaa (Gly or Ala) have small, neutral side chains.. It functions in the pathway protein modification; lipoprotein biosynthesis (signal peptide cleavage). In terms of biological role, this protein specifically catalyzes the removal of signal peptides from prolipoproteins. The polypeptide is Lipoprotein signal peptidase (Thermodesulfovibrio yellowstonii (strain ATCC 51303 / DSM 11347 / YP87)).